Reading from the N-terminus, the 758-residue chain is 5-methyltetrahydropteroyltriglutamate--homocysteine methyltransferase (758 aa).

5-methyltetrahydropteroyltri-L-glutamate contacts are provided by residues 17–20 and lysine 114; that span reads RELK. Residues 429-431 and glutamate 482 contribute to the L-homocysteine site; that span reads IGS. Residues 429–431 and glutamate 482 each bind L-methionine; that span reads IGS. 5-methyltetrahydropteroyltri-L-glutamate contacts are provided by residues 513–514 and tryptophan 559; that span reads RC. Aspartate 597 contributes to the L-homocysteine binding site. Aspartate 597 provides a ligand contact to L-methionine. Residue glutamate 603 participates in 5-methyltetrahydropteroyltri-L-glutamate binding. Histidine 639, cysteine 641, and glutamate 663 together coordinate Zn(2+). Residue histidine 692 is the Proton donor of the active site. Cysteine 724 provides a ligand contact to Zn(2+).

Belongs to the vitamin-B12 independent methionine synthase family. The cofactor is Zn(2+).

It carries out the reaction 5-methyltetrahydropteroyltri-L-glutamate + L-homocysteine = tetrahydropteroyltri-L-glutamate + L-methionine. Its pathway is amino-acid biosynthesis; L-methionine biosynthesis via de novo pathway; L-methionine from L-homocysteine (MetE route): step 1/1. Catalyzes the transfer of a methyl group from 5-methyltetrahydrofolate to homocysteine resulting in methionine formation. The chain is 5-methyltetrahydropteroyltriglutamate--homocysteine methyltransferase from Buchnera aphidicola subsp. Acyrthosiphon pisum (strain APS) (Acyrthosiphon pisum symbiotic bacterium).